The chain runs to 232 residues: Movement and silencing protein TGBp1 (232 aa).

The (+)RNA virus helicase ATP-binding domain occupies 1–117; the sequence is MDVLINKLAS…GPGIVADFVC (117 aa). The 115-residue stretch at 118 to 232 folds into the (+)RNA virus helicase C-terminal domain; sequence NKTKRFGSST…ACPDATFAPS (115 aa).

It belongs to the Tymovirales TGBp1 protein family. In terms of assembly, homodimer and homooligomer. Interacts with capsid protein. Interacts with host AGO1; this interaction targets the host protein for degradation, thereby suppressing the antiviral RNA silencing.

It is found in the host cytoplasm. In terms of biological role, transports viral genome to neighboring plant cells directly through plasmosdesmata, without any budding. The movement protein allows efficient cell to cell propagation, by bypassing the host cell wall barrier. Increases plasmodesma size exclusion limit. Acts as a suppressor of RNA-mediated gene silencing, also known as post-transcriptional gene silencing (PTGS), a mechanism of plant viral defense that limits the accumulation of viral RNAs. In Populus balsamifera (Balsam poplar), this protein is Movement and silencing protein TGBp1.